The following is a 204-amino-acid chain: 3-isopropylmalate dehydratase small subunit (204 aa).

The protein belongs to the LeuD family. LeuD type 1 subfamily. As to quaternary structure, heterodimer of LeuC and LeuD.

The catalysed reaction is (2R,3S)-3-isopropylmalate = (2S)-2-isopropylmalate. The protein operates within amino-acid biosynthesis; L-leucine biosynthesis; L-leucine from 3-methyl-2-oxobutanoate: step 2/4. Its function is as follows. Catalyzes the isomerization between 2-isopropylmalate and 3-isopropylmalate, via the formation of 2-isopropylmaleate. The chain is 3-isopropylmalate dehydratase small subunit from Ruthia magnifica subsp. Calyptogena magnifica.